The primary structure comprises 555 residues: Sulfite reductase [ferredoxin] 2 (555 aa).

Positions 1-31 (MTTARPAKARNEGQWALGNREPLNPNEEMKQ) are disordered. Positions 69–161 (YTQREQGYDG…AVGLRTTEAC (93 aa)) form a cross-link, 3'-(S-cysteinyl)-tyrosine (Tyr-Cys). 4 residues coordinate [4Fe-4S] cluster: Cys-417, Cys-423, Cys-463, and Cys-467. Position 467 (Cys-467) interacts with siroheme.

Belongs to the nitrite and sulfite reductase 4Fe-4S domain family. In terms of assembly, monomer. Siroheme serves as cofactor. Requires [4Fe-4S] cluster as cofactor.

The enzyme catalyses hydrogen sulfide + 6 oxidized [2Fe-2S]-[ferredoxin] + 3 H2O = sulfite + 6 reduced [2Fe-2S]-[ferredoxin] + 7 H(+). Its function is as follows. Catalyzes the reduction of sulfite to sulfide, a step in the biosynthesis of sulfur-containing amino acids and cofactors. The protein is Sulfite reductase [ferredoxin] 2 (sir2) of Mycolicibacterium paratuberculosis (strain ATCC BAA-968 / K-10) (Mycobacterium paratuberculosis).